Here is a 258-residue protein sequence, read N- to C-terminus: Phosphate import ATP-binding protein PstB (258 aa).

An ABC transporter domain is found at 5-247 (LDLKDVNIYY…EKIFSNPTQK (243 aa)). An ATP-binding site is contributed by 37–44 (GPSGCGKS).

Belongs to the ABC transporter superfamily. Phosphate importer (TC 3.A.1.7) family. In terms of assembly, the complex is composed of two ATP-binding proteins (PstB), two transmembrane proteins (PstC and PstA) and a solute-binding protein (PstS).

It is found in the cell membrane. It carries out the reaction phosphate(out) + ATP + H2O = ADP + 2 phosphate(in) + H(+). Functionally, part of the ABC transporter complex PstSACB involved in phosphate import. Responsible for energy coupling to the transport system. The chain is Phosphate import ATP-binding protein PstB from Rhodococcus jostii (strain RHA1).